A 293-amino-acid chain; its full sequence is Proline iminopeptidase (293 aa).

The 250-residue stretch at 28 to 277 (KPLVLLHGGP…FSRHMPFVEE (250 aa)) folds into the AB hydrolase-1 domain. Ser104 acts as the Nucleophile in catalysis. Residue Asp244 is part of the active site. Residue His271 is the Proton donor of the active site.

It belongs to the peptidase S33 family.

It carries out the reaction Release of N-terminal proline from a peptide.. In terms of biological role, releases the N-terminal proline from various substrates. The chain is Proline iminopeptidase from Clostridium botulinum (strain Hall / ATCC 3502 / NCTC 13319 / Type A).